A 327-amino-acid chain; its full sequence is (-)-delta-cadinene synthase (327 aa).

Mg(2+) is bound by residues aspartate 84, aspartate 85, asparagine 222, threonine 226, and glutamate 230.

This sequence belongs to the terpene synthase family.

It catalyses the reaction (2E,6E)-farnesyl diphosphate = (-)-delta-cadinene + diphosphate. Catalyzes the conversion of (2E,6E)-farnesyl diphosphate into (-)-delta-cadinene. Cyclization mechanism involves an intermediate nerolidyl diphosphate leading to a helminthogermacradienyl cation. The sequence is that of (-)-delta-cadinene synthase from Streptomyces clavuligerus.